A 62-amino-acid polypeptide reads, in one-letter code: Sperm protamine P1 (62 aa).

The disordered stretch occupies residues 1 to 62 (MARYRHSRSR…RYSRRGRRRY (62 aa)).

It belongs to the protamine P1 family. In terms of tissue distribution, testis.

The protein localises to the nucleus. It is found in the chromosome. Protamines substitute for histones in the chromatin of sperm during the haploid phase of spermatogenesis. They compact sperm DNA into a highly condensed, stable and inactive complex. The chain is Sperm protamine P1 (PRM1) from Trichosurus vulpecula (Brush-tailed possum).